The chain runs to 598 residues: MFS transporter L2 (598 aa).

3 consecutive transmembrane segments (helical) span residues 83–103 (IAAFLSLCIIVLMAALDATSI), 122–142 (FWAGTSFLLTSTIFQPVLGSF), and 150–170 (SLIYISLVFFLAGSIIPAVAN). Residue Asn-171 is glycosylated (N-linked (GlcNAc...) asparagine). A run of 5 helical transmembrane segments spans residues 183–203 (GVGGGGIIALTEMVVVDTVPL), 212–232 (FFGMMWSFGTVAGPLIGGAFA), 239–259 (WVFWINLPFLGIGTVLITVFL), 277–297 (WIGMVLFLGSTTGFLIPITWG), and 309–329 (LVPLIVSAAGIVAFIVHQEKF). N-linked (GlcNAc...) asparagine glycosylation occurs at Asn-342. The next 6 membrane-spanning stretches (helical) occupy residues 346-366 (ALLYLTTVIHGIILWAILYFM), 383-403 (VALFPWTFTVAPGAVATGIAI), 411-431 (WANWAGWFLATLGSGLLILLK), 439-459 (WIFLNLVGGIGTGILFPAMAL), 476-496 (MFSFFRAFGQTLGVAIGGVVF), and 550-570 (YIWIVATVLAGVSLVATLFID).

Belongs to the major facilitator superfamily.

Its subcellular location is the membrane. Functionally, MFS transporter; part of the gene cluster that mediates the biosynthesis of squalestatin S1 (SQS1, also known as zaragozic acid A), a lead compound for the treatment of hyper-cholesterolemia by targeting squalene synthase (SS). This Phoma sp. (strain ATCC 20986 / MF5453) protein is MFS transporter L2.